A 509-amino-acid polypeptide reads, in one-letter code: Heat shock 70 kDa protein 14 (509 aa).

Belongs to the heat shock protein 70 family. In terms of assembly, component of ribosome-associated complex (RAC), a heterodimer composed of Hsp70/DnaK-type chaperone HSPA14 and Hsp40/DnaJ-type chaperone DNAJC2.

It is found in the cytoplasm. The protein localises to the cytosol. Functionally, component of the ribosome-associated complex (RAC), a complex involved in folding or maintaining nascent polypeptides in a folding-competent state. In the RAC complex, binds to the nascent polypeptide chain, while DNAJC2 stimulates its ATPase activity. This chain is Heat shock 70 kDa protein 14 (HSPA14), found in Macaca fascicularis (Crab-eating macaque).